The sequence spans 269 residues: Ribosomal RNA small subunit methyltransferase A (269 aa).

6 residues coordinate S-adenosyl-L-methionine: Asn18, Leu20, Gly45, Glu66, Asp91, and Asn112.

The protein belongs to the class I-like SAM-binding methyltransferase superfamily. rRNA adenine N(6)-methyltransferase family. RsmA subfamily.

Its subcellular location is the cytoplasm. The catalysed reaction is adenosine(1518)/adenosine(1519) in 16S rRNA + 4 S-adenosyl-L-methionine = N(6)-dimethyladenosine(1518)/N(6)-dimethyladenosine(1519) in 16S rRNA + 4 S-adenosyl-L-homocysteine + 4 H(+). In terms of biological role, specifically dimethylates two adjacent adenosines (A1518 and A1519) in the loop of a conserved hairpin near the 3'-end of 16S rRNA in the 30S particle. May play a critical role in biogenesis of 30S subunits. In Shewanella loihica (strain ATCC BAA-1088 / PV-4), this protein is Ribosomal RNA small subunit methyltransferase A.